A 101-amino-acid polypeptide reads, in one-letter code: Small ribosomal subunit protein uS14 (101 aa).

Over residues 1 to 10 (MAKKSAIEKN) the composition is skewed to basic and acidic residues. The segment at 1 to 23 (MAKKSAIEKNNRRKKMTKNAAPK) is disordered. The span at 11-23 (NRRKKMTKNAAPK) shows a compositional bias: basic residues.

It belongs to the universal ribosomal protein uS14 family. As to quaternary structure, part of the 30S ribosomal subunit. Contacts proteins S3 and S10.

Its function is as follows. Binds 16S rRNA, required for the assembly of 30S particles and may also be responsible for determining the conformation of the 16S rRNA at the A site. This chain is Small ribosomal subunit protein uS14, found in Rhodopseudomonas palustris (strain TIE-1).